The chain runs to 465 residues: GTPase Der (465 aa).

2 EngA-type G domains span residues 3–167 (PLVA…PEEG) and 179–352 (IRIA…ESAN). Residues 9–16 (GRPNVGKS), 57–61 (DTGGI), 119–122 (NKID), 185–192 (GRPNVGKS), 232–236 (DTAGL), and 297–300 (NKWD) contribute to the GTP site. The region spanning 353 to 437 (KTFTTSEVNK…PVSFIFREGT (85 aa)) is the KH-like domain.

This sequence belongs to the TRAFAC class TrmE-Era-EngA-EngB-Septin-like GTPase superfamily. EngA (Der) GTPase family. Associates with the 50S ribosomal subunit.

In terms of biological role, GTPase that plays an essential role in the late steps of ribosome biogenesis. The protein is GTPase Der of Stenotrophomonas maltophilia (strain K279a).